The chain runs to 453 residues: Ribosomal protein uS12 methylthiotransferase RimO (453 aa).

Positions 4 to 120 (TSVHIVSLGC…IADHLRVLME (117 aa)) constitute an MTTase N-terminal domain. [4Fe-4S] cluster contacts are provided by Cys-13, Cys-49, Cys-83, Cys-161, Cys-165, and Cys-168. The Radical SAM core domain maps to 147–377 (STPPYSAYLK…MEEQAVISHE (231 aa)). Residues 380–450 (QTLVGSLQEV…DYDLFAEVIS (71 aa)) enclose the TRAM domain.

The protein belongs to the methylthiotransferase family. RimO subfamily. [4Fe-4S] cluster is required as a cofactor.

Its subcellular location is the cytoplasm. The catalysed reaction is L-aspartate(89)-[ribosomal protein uS12]-hydrogen + (sulfur carrier)-SH + AH2 + 2 S-adenosyl-L-methionine = 3-methylsulfanyl-L-aspartate(89)-[ribosomal protein uS12]-hydrogen + (sulfur carrier)-H + 5'-deoxyadenosine + L-methionine + A + S-adenosyl-L-homocysteine + 2 H(+). Functionally, catalyzes the methylthiolation of an aspartic acid residue of ribosomal protein uS12. The chain is Ribosomal protein uS12 methylthiotransferase RimO from Syntrophus aciditrophicus (strain SB).